A 311-amino-acid polypeptide reads, in one-letter code: Apulose-4-phosphate transketolase subunit B (311 aa).

This sequence belongs to the transketolase family. In terms of assembly, probable heterodimer composed of AptA and AptB. Thiamine diphosphate serves as cofactor.

It catalyses the reaction apulose 4-phosphate + D-glyceraldehyde 3-phosphate = D-xylulose 5-phosphate + dihydroxyacetone phosphate. Its pathway is carbohydrate metabolism. Functionally, involved in catabolism of D-apiose. Catalyzes the transfer of the glycolaldehyde group from apulose-4-phosphate to D-glyceraldehyde 3-phosphate, generating dihydroxyacetone phosphate and D-xylulose-5-phosphate. This is Apulose-4-phosphate transketolase subunit B from Actinobacillus succinogenes (strain ATCC 55618 / DSM 22257 / CCUG 43843 / 130Z).